The sequence spans 431 residues: MASFLHNFLLFFCSLSLIILTSSATKSQTHVPIRPNKLVLKVQKDRATNLHVVQIHKRTPLVQFPFVIDLTGRFLSVNCENQYTSSTYKAPVCHSSQCARANSHTCRTCSSSKTRPGCHTNACGLLTTNPVTQQSAQGELAEDVLKIPSTQGSSPGPMVTYPHFLFACAPSNILQKGLPKNVQGVAGLGHSPISLPYQLASHFGFPPKFAVCLTSSPGKNGAVFFGEGPYFMKPGIDVSRQLTYAPFTIGQQGEYYINVQSFKINNAMLPSIPKGGFGGAMISTTTPYTTLQTPIFRALNQLFMNQLRGVPHVKPVAPFGACFDANRIPTSKMGPTVPSIDLVLDNKKNIMWRIFGANAMIQPRPGVMCLAFVDGGMRPKAPIVIGTQQLEDNLLQFDLMNSRLGFSSSLLFRRTNCANFNFGTSSTNTDP.

A signal peptide spans 1-24; that stretch reads MASFLHNFLLFFCSLSLIILTSSA. One can recognise a Peptidase A1 domain in the interval 51–407; that stretch reads HVVQIHKRTP…DLMNSRLGFS (357 aa). Cystine bridges form between Cys-79/Cys-168, Cys-93/Cys-106, Cys-98/Cys-123, Cys-109/Cys-118, and Cys-322/Cys-369.

Belongs to the peptidase A1 family. In terms of assembly, two-subunit monomeric unit made of alpha and beta subunits coupled by disulfide bonds (at pH 4.5 and under non-reducing conditions). Monomeric alpha and beta subunits in reducing conditions. Can also form oligomers including dimer, tetramer and cyclic hexamer (trimer of dimers) (at pH &gt; 5.5). Component of globulins complexes which accumulate in seeds. Interacts with flavonoids (e.g. apigenin glucosides) present in globulins complexes.

The protein localises to the secreted. It localises to the extracellular space. Sulfur-rich seed storage protein that remains undegraded at germination. In Prunus dulcis (Almond), this protein is Gamma conglutin 1.